Consider the following 169-residue polypeptide: Lipoprotein signal peptidase (169 aa).

Residues 1 to 9 lie on the Cytoplasmic side of the membrane; sequence MPDVDRFGR. A helical membrane pass occupies residues 10 to 30; that stretch reads LPWLWITVLVFVLDQVSKAFF. Topologically, residues 31 to 67 are periplasmic; the sequence is QAELSMYQQIVVIPDLFSWTLAYNTGAAFSFLADSSG. The chain crosses the membrane as a helical span at residues 68 to 89; that stretch reads WQRWLFALIAIVVSASLVVWLK. The Cytoplasmic portion of the chain corresponds to 90-96; the sequence is RLKKGET. Residues 97–118 form a helical membrane-spanning segment; sequence WLAIALALVLGGALGNLYDRMV. Over 119-140 the chain is Periplasmic; sequence LGHVVDFILVHWQNRWYFPAFN. Residues D124 and D143 contribute to the active site. A helical transmembrane segment spans residues 141–154; sequence LADSAITVGAVMLA. Residues 155 to 169 are Cytoplasmic-facing; sequence LDMFRSKKSGEAAHG.

The protein belongs to the peptidase A8 family. Monomer in the crystal.

The protein resides in the cell inner membrane. It carries out the reaction Release of signal peptides from bacterial membrane prolipoproteins. Hydrolyzes -Xaa-Yaa-Zaa-|-(S,diacylglyceryl)Cys-, in which Xaa is hydrophobic (preferably Leu), and Yaa (Ala or Ser) and Zaa (Gly or Ala) have small, neutral side chains.. Its pathway is protein modification; lipoprotein biosynthesis (signal peptide cleavage). Inhibited by globomycin. This protein specifically catalyzes the removal of signal peptides from prolipoproteins. The protein is Lipoprotein signal peptidase of Pseudomonas aeruginosa (strain ATCC 15692 / DSM 22644 / CIP 104116 / JCM 14847 / LMG 12228 / 1C / PRS 101 / PAO1).